The primary structure comprises 902 residues: Androgen receptor (902 aa).

Positions 1–540 (MEVQLGLGRV…PIDYYFPPQK (540 aa)) are modulating. Residues 1 to 569 (MEVQLGLGRV…GSCKVFFKRA (569 aa)) form an interaction with ZNF318 region. 2 disordered regions span residues 35 to 146 (QNPG…LSLL) and 194 to 224 (QQEV…YLGG). A Phosphoserine; by CDK9 modification is found at Ser61. Ser75 carries the phosphoserine modification. The span at 94-103 (QPSQQQSASE) shows a compositional bias: low complexity. Composition is skewed to polar residues over residues 196-205 (EVISEGSSSV) and 213-224 (APSSSKDSYLGG). At Tyr221 the chain carries Phosphotyrosine; by CSK. The residue at position 254 (Ser254) is a Phosphoserine. A Phosphotyrosine; by CSK and TNK2 modification is found at Tyr265. Ser290 bears the Phosphoserine mark. Phosphotyrosine; by CSK occurs at positions 305, 344, 355, and 360. Tyr361 carries the post-translational modification Phosphotyrosine; by CSK and TNK2. Lys384 participates in a covalent cross-link: Glycyl lysine isopeptide (Lys-Gly) (interchain with G-Cter in SUMO). A Phosphotyrosine; by CSK modification is found at Tyr391. Positions 439–465 (EGQLYGPGGGGGSSSPSDAGPVAPYGY) are disordered. Lys503 is covalently cross-linked (Glycyl lysine isopeptide (Lys-Gly) (interchain with G-Cter in SUMO)). 2 positions are modified to phosphotyrosine; by CSK: Tyr517 and Tyr534. Residues 534–901 (YYFPPQKTCL…GKVKPIYFHT (368 aa)) form an interaction with LPXN region. Positions 541-614 (TCLICGDEAS…AGMTLGARKL (74 aa)) form a DNA-binding region, nuclear receptor. 2 consecutive NR C4-type zinc fingers follow at residues 542–562 (CLIC…CGSC) and 578–602 (CASR…LRKC). The tract at residues 554–644 (YGALTCGSCK…TEDPSQKMTV (91 aa)) is interaction with HIPK3. The tract at residues 574–901 (QKYLCASRND…GKVKPIYFHT (328 aa)) is interaction with CCAR1. The tract at residues 607-901 (MTLGARKLKK…GKVKPIYFHT (295 aa)) is interaction with KAT7. Residue Ser633 is modified to Phosphoserine. Positions 651–882 (ECQPIFLNVL…DFPEMMAEII (232 aa)) constitute an NR LBD domain. Residues Asn688 and Arg735 each coordinate 17beta-hydroxy-5alpha-androstan-3-one. Glycyl lysine isopeptide (Lys-Gly) (interchain with G-Cter in ubiquitin) cross-links involve residues Lys828 and Lys830. Residue Thr860 participates in 17beta-hydroxy-5alpha-androstan-3-one binding. Tyr898 carries the post-translational modification Phosphotyrosine; by CSK.

It belongs to the nuclear hormone receptor family. NR3 subfamily. In terms of assembly, binds DNA as a homodimer. Part of a ternary complex containing AR, EFCAB6/DJBP and PARK7. Interacts with HIPK3 and NR0B2 in the presence of androgen. The ligand binding domain interacts with KAT7/HBO1 in the presence of dihydrotestosterone. Interacts with EFCAB6/DJBP, PQBP1, RANBP9, RBAK, SPDEF, SRA1, TGFB1I1, ZNF318 and RREB1. Interacts with ZMIZ1/ZIMP10 and ZMIZ2/ZMIP7 which both enhance its transactivation activity. Interacts with SLC30A9 and RAD54L2/ARIP4. Interacts with MACROD1 (via macro domain). Interacts via the ligand-binding domain with LXXLL and FXXLF motifs from NCOA1, NCOA2, NCOA3 and MAGEA11. Interacts (via nuclear receptor DNA binding domain and nuclear receptor ligand binding domain) with NCOA4. The AR N-terminal poly-Gln region binds Ran resulting in enhancement of AR-mediated transactivation. Ran-binding decreases as the poly-Gln length increases. Interacts with HIP1 (via coiled coil domain). Interacts (via ligand-binding domain) with TRIM68. Interacts with TNK2. Interacts with USP26. Interacts with RNF6. Interacts (regulated by RNF6 probably through polyubiquitination) with RNF14; regulates AR transcriptional activity. Interacts with PRMT2 and TRIM24. Interacts with RACK1. Interacts with RANBP10; this interaction enhances dihydrotestosterone-induced AR transcriptional activity. Interacts with PRPF6 in a hormone-independent way; this interaction enhances dihydrotestosterone-induced AR transcriptional activity. Interacts with STK4/MST1. Interacts with ZIPK/DAPK3. Interacts with LPXN. Interacts with MAK. Part of a complex containing AR, MAK and NCOA3. Interacts with CRY1. Interacts with CCAR1 and GATA2. Interacts with BUD31. Interacts with ARID4A. Interacts with ARID4B. Interacts (via NR LBD domain) with ZBTB7A; the interaction is direct and androgen-dependent. Interacts with NCOR1. Interacts with NCOR2. Interacts with CRY2 in a ligand-dependent manner. Phosphorylated in prostate cancer cells in response to several growth factors including EGF. Phosphorylation is induced by c-Src kinase (CSK). Tyr-517 is one of the major phosphorylation sites and an increase in phosphorylation and Src kinase activity is associated with prostate cancer progression. Phosphorylation by TNK2 enhances the DNA-binding and transcriptional activity. Phosphorylation at Ser-61 by CDK9 regulates AR promoter selectivity and cell growth. Phosphorylation by PAK6 leads to AR-mediated transcription inhibition. Post-translationally, sumoylated on Lys-384 (major) and Lys-503. Ubiquitinated. Deubiquitinated by USP26. 'Lys-6' and 'Lys-27'-linked polyubiquitination by RNF6 modulates AR transcriptional activity and specificity. In terms of processing, palmitoylated by ZDHHC7 and ZDHHC21. Palmitoylation is required for plasma membrane targeting and for rapid intracellular signaling via ERK and AKT kinases and cAMP generation. As to expression, highest levels in the seminal vesicle, ventral prostate and coagulating gland with lower levels in the kidney and levator ani muscle.

The protein localises to the nucleus. The protein resides in the cytoplasm. Steroid hormone receptors are ligand-activated transcription factors that regulate eukaryotic gene expression and affect cellular proliferation and differentiation in target tissues. Transcription factor activity is modulated by bound coactivator and corepressor proteins like ZBTB7A that recruits NCOR1 and NCOR2 to the androgen response elements/ARE on target genes, negatively regulating androgen receptor signaling and androgen-induced cell proliferation. Transcription activation is also down-regulated by NR0B2. Activated, but not phosphorylated, by HIPK3 and ZIPK/DAPK3. This chain is Androgen receptor (Ar), found in Rattus norvegicus (Rat).